A 970-amino-acid polypeptide reads, in one-letter code: Cullin-4B (970 aa).

Positions 1 to 14 (MSRSTRSKERREND) are enriched in basic and acidic residues. 2 disordered regions span residues 1-157 (MSRS…SFCL) and 189-211 (AEES…QQQQ). Thr-15 bears the Phosphothreonine mark. Ser-17 carries the phosphoserine modification. Pro residues predominate over residues 36-57 (PPRPPYPPLLPPVFPPPTPPPQ). Residues 78-98 (SGFSSPNPSAASAAAQEVRSA) show a composition bias toward low complexity. Positions 99–109 (TDGNTSTTPPT) are enriched in polar residues. Position 106 is a phosphothreonine (Thr-106). Ser-110 is modified (phosphoserine). The Nuclear localization signal motif lies at 112–115 (KKRK). Low complexity predominate over residues 117–126 (NSSSSSSNSS). Over residues 146 to 155 (DSASPSTSSF) the composition is skewed to polar residues. Phosphoserine occurs at positions 154 and 200. Low complexity predominate over residues 192–211 (SSSSSSSSSPTAATSQQQQQ). Residue Thr-202 is modified to Phosphothreonine. Lys-247 participates in a covalent cross-link: Glycyl lysine isopeptide (Lys-Gly) (interchain with G-Cter in ubiquitin). Position 250 is a phosphoserine (Ser-250). In terms of domain architecture, Cullin neddylation spans 902-962 (DRQYQIDAAI…RDYMERDKEN (61 aa)). A Glycyl lysine isopeptide (Lys-Gly) (interchain with G-Cter in NEDD8) cross-link involves residue Lys-916.

This sequence belongs to the cullin family. In terms of assembly, component of multiple DCX (DDB1-CUL4-X-box) E3 ubiquitin-protein ligase complexes that seem to be formed of DDB1, CUL4A or CUL4B, RBX1 and a variable substrate recognition component which seems to belong to a protein family described as DCAF (Ddb1- and Cul4-associated factor) or CDW (CUL4-DDB1-associated WD40-repeat) proteins. Component of the DCX(DTL) complex with the putative substrate recognition component DTL. Component of the DCX(DDB2) complex with the putative substrate recognition component DDB2. Component of DCX complexes part of the DesCEND (destruction via C-end degrons) pathway, which contain either TRPC4AP or DCAF12 as substrate-recognition component. Component of the DCX(AMBRA1) complex with the substrate recognition component AMBRA1. Part of a complex with RBX1 and TIP120A/CAND1. Component of the DCX(WDR77) complex, composed of Cul4b, Ddb1, Wdr77 and Rbx1. Interacts with RBX1, GRWD1, MLST8, SMU1, TLE2, TLE3, DCAF1, DDA1, DCAF6, DCAF17, DDB2, DCAF8, TIP120A/CAND1 and TMEM113. Interacts with cyclin E (CCNE1 or CCNE2) and with importins alpha-1 (KPNA2), alpha-3 (KPNA4), alpha-5 (KPNA1) and beta-1 (KPNB1). May interact with WDR26, WDR51B, SNRNP40, WDR61, WDR76 and WDR5. Interacts (unneddylated form) with DCUN1D1, DCUN1D2, DCUN1D3, DCUN1D4 and DCUN1D5; these interactions promote the cullin neddylation. In terms of processing, neddylated. Deneddylated via its interaction with the COP9 signalosome (CSN) complex. As to expression, expressed in oocytes (at protein level).

Its subcellular location is the cytoplasm. It is found in the nucleus. The protein operates within protein modification; protein ubiquitination. Core component of multiple cullin-RING-based E3 ubiquitin-protein ligase complexes which mediate the ubiquitination and subsequent proteasomal degradation of target proteins. The functional specificity of the E3 ubiquitin-protein ligase complex depends on the variable substrate recognition subunit. CUL4B may act within the complex as a scaffold protein, contributing to catalysis through positioning of the substrate and the ubiquitin-conjugating enzyme. Plays a role as part of the E3 ubiquitin-protein ligase complex in polyubiquitination of CDT1, histone H2A, histone H3 and histone H4 in response to radiation-induced DNA damage. Targeted to UV damaged chromatin by DDB2 and may be important for DNA repair and DNA replication. A number of DCX complexes (containing either TRPC4AP or DCAF12 as substrate-recognition component) are part of the DesCEND (destruction via C-end degrons) pathway, which recognizes a C-degron located at the extreme C terminus of target proteins, leading to their ubiquitination and degradation. The DCX(AMBRA1) complex is a master regulator of the transition from G1 to S cell phase by mediating ubiquitination of phosphorylated cyclin-D (CCND1, CCND2 and CCND3). The DCX(AMBRA1) complex also acts as a regulator of Cul5-RING (CRL5) E3 ubiquitin-protein ligase complexes by mediating ubiquitination and degradation of Elongin-C (ELOC) component of CRL5 complexes. Required for ubiquitination of cyclin E (CCNE1 or CCNE2), and consequently, normal G1 cell cycle progression. Component of the DCX(WDR77) complex, which mediates ubiquitination and degradation of Irgm1 in intestinal cells. Regulates the mammalian target-of-rapamycin (mTOR) pathway involved in control of cell growth, size and metabolism. Specific CUL4B regulation of the mTORC1-mediated pathway is dependent upon 26S proteasome function and requires interaction between CUL4B and MLST8. With CUL4A, contributes to ribosome biogenesis. The polypeptide is Cullin-4B (Mus musculus (Mouse)).